The chain runs to 445 residues: Trigger factor (445 aa).

The 86-residue stretch at 162–247 (GDQVTIDAIG…IKAVHTAEPT (86 aa)) folds into the PPIase FKBP-type domain.

It belongs to the FKBP-type PPIase family. Tig subfamily.

It localises to the cytoplasm. The catalysed reaction is [protein]-peptidylproline (omega=180) = [protein]-peptidylproline (omega=0). In terms of biological role, involved in protein export. Acts as a chaperone by maintaining the newly synthesized protein in an open conformation. Functions as a peptidyl-prolyl cis-trans isomerase. The chain is Trigger factor from Rickettsia africae (strain ESF-5).